We begin with the raw amino-acid sequence, 225 residues long: MADS-box transcription factor 5 (225 aa).

One can recognise an MADS-box domain in the interval 1–61 (MGRGKVELKR…GRLFEFSTSS (61 aa)). Residues 89–179 (ELSNYQEYLK…KRKIQETSGE (91 aa)) form the K-box domain.

In terms of assembly, may interact with the K-box of MADS6.

The protein localises to the nucleus. In terms of biological role, probable transcription factor. This Oryza sativa subsp. indica (Rice) protein is MADS-box transcription factor 5 (MADS5).